Consider the following 613-residue polypeptide: tRNA 5-methylaminomethyl-2-thiouridine biosynthesis bifunctional protein MnmC (613 aa).

The interval 1 to 225 (MKKAKLIFKD…KREMIKAYLE (225 aa)) is tRNA (mnm(5)s(2)U34)-methyltransferase. The FAD-dependent cmnm(5)s(2)U34 oxidoreductase stretch occupies residues 252–613 (IGAGISSAVL…FLIRKLKKGL (362 aa)).

It in the N-terminal section; belongs to the methyltransferase superfamily. tRNA (mnm(5)s(2)U34)-methyltransferase family. The protein in the C-terminal section; belongs to the DAO family. The cofactor is FAD.

The protein localises to the cytoplasm. The catalysed reaction is 5-aminomethyl-2-thiouridine(34) in tRNA + S-adenosyl-L-methionine = 5-methylaminomethyl-2-thiouridine(34) in tRNA + S-adenosyl-L-homocysteine + H(+). Its function is as follows. Catalyzes the last two steps in the biosynthesis of 5-methylaminomethyl-2-thiouridine (mnm(5)s(2)U) at the wobble position (U34) in tRNA. Catalyzes the FAD-dependent demodification of cmnm(5)s(2)U34 to nm(5)s(2)U34, followed by the transfer of a methyl group from S-adenosyl-L-methionine to nm(5)s(2)U34, to form mnm(5)s(2)U34. This is tRNA 5-methylaminomethyl-2-thiouridine biosynthesis bifunctional protein MnmC from Campylobacter jejuni subsp. jejuni serotype O:6 (strain 81116 / NCTC 11828).